The chain runs to 317 residues: Exopolysaccharide production protein ExoZ (317 aa).

The next 7 helical transmembrane spans lie at 14 to 34 (TIGA…MWVI), 53 to 73 (IVPV…AGLF), 100 to 120 (IWPV…YAVF), 132 to 152 (LPVV…VAFD), 185 to 205 (LAVG…IGVL), 206 to 226 (GLPF…IGVL), and 268 to 288 (IGLG…LIGI).

This sequence belongs to the acyltransferase 3 family.

It localises to the cell membrane. Required for the acetyl modification of the third sugar (glucose) of the octasaccharide subunit of succinoglycan (EPS I). The protein is Exopolysaccharide production protein ExoZ (exoZ) of Rhizobium meliloti (strain 1021) (Ensifer meliloti).